Here is a 351-residue protein sequence, read N- to C-terminus: 3-ketosteroid-9-alpha-monooxygenase, ferredoxin reductase component (351 aa).

In terms of domain architecture, FAD-binding FR-type spans 10–116 (SRSVILTVSA…LPPAGVFTPK (107 aa)). One can recognise a 2Fe-2S ferredoxin-type domain in the interval 264–351 (ATVEVELDGE…PVTDHLKIEF (88 aa)). Residues cysteine 300, cysteine 305, cysteine 308, and cysteine 338 each coordinate [2Fe-2S] cluster.

As to quaternary structure, the two-component system 3-ketosteroid-9-alpha-monooxygenase is composed of an oxygenase component KshA and a reductase component KshB. Requires FAD as cofactor. The cofactor is [2Fe-2S] cluster.

The enzyme catalyses androsta-1,4-diene-3,17-dione + 2 reduced [2Fe-2S]-[ferredoxin] + O2 + 2 H(+) = 9alpha-hydroxyandrosta-1,4-diene-3,17-dione + 2 oxidized [2Fe-2S]-[ferredoxin] + H2O. It participates in steroid metabolism; cholesterol degradation. KSH activity is completely inhibited by zinc ions. KshB is specifically inhibited by Cu(2+) ions. Its function is as follows. Probably involved in the degradation of cholesterol. In vitro, catalyzes the introduction of a 9alpha-hydroxyl moiety into the ring B of 3-ketosteroid substrates such as 1,4-androstadiene-3,17-dione (ADD), 4-androstene-3,17-dione (AD), 4-androstene-17beta-ol-3-one (testosterone), 4-pregnene-3,20-dione (progesterone), 19-nor-4-androstene-3,17-dione (nordion), 1-(5alpha)-androstene-3,17-dione, 5alpha-androstane-3,17-dione and 5beta-androstane-3,17-dione. KSH has the highest activity with 3-keto-Delta4 steroid substrates. The protein is 3-ketosteroid-9-alpha-monooxygenase, ferredoxin reductase component of Rhodococcus rhodochrous.